The following is a 144-amino-acid chain: Large ribosomal subunit protein uL15 (144 aa).

Residues Met-1 to Glu-51 form a disordered region. Residues Arg-21–Gly-31 are compositionally biased toward gly residues. Residues Gly-32–Arg-47 are compositionally biased toward basic residues.

The protein belongs to the universal ribosomal protein uL15 family. Part of the 50S ribosomal subunit.

Its function is as follows. Binds to the 23S rRNA. This is Large ribosomal subunit protein uL15 from Actinobacillus succinogenes (strain ATCC 55618 / DSM 22257 / CCUG 43843 / 130Z).